We begin with the raw amino-acid sequence, 233 residues long: MNKILLQCDNLCKRYQEGSVQTDVLHNVSFSVGEGEMMAIVGSSGSGKSTLLHLLGGLDTPTSGDVIFNGQPMSKLSSAAKAELRNQKLGFIYQFHHLLPDFTALENVAMPLLIGKKKPAEINSRALEMLKAVGLEHRANHRPSELSGGERQRVAIARALVNNPRLVLADEPTGNLDARNADSIFQLLGELNRLQGTAFLVVTHDLQLAKRMSRQLEMRDGRLTAELSLMGAE.

The 228-residue stretch at 6–233 (LQCDNLCKRY…TAELSLMGAE (228 aa)) folds into the ABC transporter domain. 42 to 49 (GSSGSGKS) provides a ligand contact to ATP.

The protein belongs to the ABC transporter superfamily. Lipoprotein translocase (TC 3.A.1.125) family. In terms of assembly, the complex is composed of two ATP-binding proteins (LolD) and two transmembrane proteins (LolC and LolE).

The protein resides in the cell inner membrane. Functionally, part of the ABC transporter complex LolCDE involved in the translocation of mature outer membrane-directed lipoproteins, from the inner membrane to the periplasmic chaperone, LolA. Responsible for the formation of the LolA-lipoprotein complex in an ATP-dependent manner. This is Lipoprotein-releasing system ATP-binding protein LolD from Escherichia coli O6:K15:H31 (strain 536 / UPEC).